A 201-amino-acid chain; its full sequence is DeSI-like protein sdu1 (201 aa).

The region spanning 1 to 143 (MKVYINVYDL…AFPTITNALL (143 aa)) is the PPPDE domain. Residues H29 and C105 contribute to the active site. The segment at 146–201 (GQKNTSDVDDSSDSSSDVDEETLIVSKSKKAHKDIPKFSAPPPSADLNNLITDSLP) is disordered. Over residues 152–167 (DVDDSSDSSSDVDEET) the composition is skewed to acidic residues. Residues 191–201 (DLNNLITDSLP) show a composition bias toward polar residues.

This sequence belongs to the DeSI family.

It is found in the cytoplasm. Functionally, has a role in meiosis. The protein is DeSI-like protein sdu1 (sdu1) of Schizosaccharomyces pombe (strain 972 / ATCC 24843) (Fission yeast).